Consider the following 152-residue polypeptide: Cytochrome c oxidase subunit 5A, mitochondrial (152 aa).

The transit peptide at 1–43 directs the protein to the mitochondrion; sequence MLGTALRRCAVAAAAASRAGPRGLLHPAPAPGPAAAIQSIRCY. The short motif at 2-22 is the SIFI-degron element; sequence LGTALRRCAVAAAAASRAGPR. N6-acetyllysine is present on residues Lys-89 and Lys-115. Phosphothreonine is present on Thr-143.

It belongs to the cytochrome c oxidase subunit 5A family. In terms of assembly, component of the cytochrome c oxidase (complex IV, CIV), a multisubunit enzyme composed of 14 subunits. The complex is composed of a catalytic core of 3 subunits MT-CO1, MT-CO2 and MT-CO3, encoded in the mitochondrial DNA, and 11 supernumerary subunits COX4I, COX5A, COX5B, COX6A, COX6B, COX6C, COX7A, COX7B, COX7C, COX8 and NDUFA4, which are encoded in the nuclear genome. The complex exists as a monomer or a dimer and forms supercomplexes (SCs) in the inner mitochondrial membrane with NADH-ubiquinone oxidoreductase (complex I, CI) and ubiquinol-cytochrome c oxidoreductase (cytochrome b-c1 complex, complex III, CIII), resulting in different assemblies (supercomplex SCI(1)III(2)IV(1) and megacomplex MCI(2)III(2)IV(2)). Interacts with AFG1L. Interacts with RAB5IF. In response to mitochondrial stress, the precursor protein is ubiquitinated by the SIFI complex in the cytoplasm before mitochondrial import, leading to its degradation. Within the SIFI complex, UBR4 initiates ubiquitin chain that are further elongated or branched by KCMF1.

It localises to the mitochondrion inner membrane. It functions in the pathway energy metabolism; oxidative phosphorylation. Its function is as follows. Component of the cytochrome c oxidase, the last enzyme in the mitochondrial electron transport chain which drives oxidative phosphorylation. The respiratory chain contains 3 multisubunit complexes succinate dehydrogenase (complex II, CII), ubiquinol-cytochrome c oxidoreductase (cytochrome b-c1 complex, complex III, CIII) and cytochrome c oxidase (complex IV, CIV), that cooperate to transfer electrons derived from NADH and succinate to molecular oxygen, creating an electrochemical gradient over the inner membrane that drives transmembrane transport and the ATP synthase. Cytochrome c oxidase is the component of the respiratory chain that catalyzes the reduction of oxygen to water. Electrons originating from reduced cytochrome c in the intermembrane space (IMS) are transferred via the dinuclear copper A center (CU(A)) of subunit 2 and heme A of subunit 1 to the active site in subunit 1, a binuclear center (BNC) formed by heme A3 and copper B (CU(B)). The BNC reduces molecular oxygen to 2 water molecules using 4 electrons from cytochrome c in the IMS and 4 protons from the mitochondrial matrix. The polypeptide is Cytochrome c oxidase subunit 5A, mitochondrial (COX5A) (Eulemur fulvus fulvus (Brown lemur)).